The following is a 327-amino-acid chain: MSVMSYIDAINLAMKEEMERDSRVFVLGEDVGRKGGVFKATAGLYEQFGEERVMDTPLAESAIAGVGIGAAMYGMRPIAEMQFADFIMPAVNQIISEAAKIRYRSNNDWSCPIVVRAPYGGGVHGALYHSQSVEAIFANQPGLKIVMPSTPYDAKGLLKAAVRDEDPVLFFEHKRAYRLIKGEVPADDYVLPIGKADVKREGDDITVITYGLCVHFALQAAERLEKDGISAHVVDLRTVYPLDKEAIIEAASKTGKVLLVTEDTKEGSIMSEVAAIISEHCLFDLDAPIKRLAGPDIPAMPYAPTMEKYFMVNPDKVEAAMRELAEF.

Thiamine diphosphate-binding positions include E29, 58–60 (LAE), Q82, and 86–89 (FIMP). Residues 83-86 (FADF) and H129 contribute to the substrate site. H129 functions as the Proton acceptor in the catalytic mechanism.

In terms of assembly, heterotetramer of two alpha and two beta chains. Directly associated with ODBA in the E1 complex. The cofactor is thiamine diphosphate.

It catalyses the reaction N(6)-[(R)-lipoyl]-L-lysyl-[protein] + 3-methyl-2-oxobutanoate + H(+) = N(6)-[(R)-S(8)-2-methylpropanoyldihydrolipoyl]-L-lysyl-[protein] + CO2. The branched-chain alpha-keto dehydrogenase complex catalyzes the overall conversion of alpha-keto acids to acyl-CoA and CO(2). It contains multiple copies of three enzymatic components: branched-chain alpha-keto acid decarboxylase (E1), lipoamide acyltransferase (E2) and lipoamide dehydrogenase (E3). This chain is 2-oxoisovalerate dehydrogenase subunit beta (bfmBAB), found in Bacillus subtilis (strain 168).